Consider the following 154-residue polypeptide: Small ribosomal subunit protein uS9 (154 aa).

2 disordered regions span residues 1 to 33 (MVPP…SGLG) and 115 to 154 (PENN…YSKR). Basic residues predominate over residues 135 to 154 (KERKKAGLKKARKAPQYSKR).

This sequence belongs to the universal ribosomal protein uS9 family.

In Tropheryma whipplei (strain TW08/27) (Whipple's bacillus), this protein is Small ribosomal subunit protein uS9.